Reading from the N-terminus, the 300-residue chain is Acetaldehyde dehydrogenase 3 (300 aa).

11 to 14 serves as a coordination point for NAD(+); the sequence is SGNI. The active-site Acyl-thioester intermediate is the Cys126. NAD(+)-binding positions include 157-165 and Asn276; that span reads SAGPGTRAN.

It belongs to the acetaldehyde dehydrogenase family.

It carries out the reaction acetaldehyde + NAD(+) + CoA = acetyl-CoA + NADH + H(+). This chain is Acetaldehyde dehydrogenase 3, found in Rhodococcus opacus (strain B4).